The chain runs to 180 residues: MYHVIAATTNPAKINAITLAFDDVYGPGQYRIEGVNVDSGVPLQPIGSTETRIGARQRVKNARQVRPEADFWVGIEAGIEDNMTFAWMVIEHLQARGESRSASLMLPDIILQGIRQGRELGDEMAVLSGISNVKQQGGAIGIFTQGKLTRTSVYHQALLLALVPFHNEIYQRPSPSKPAI.

8-13 (TTNPAK) provides a ligand contact to substrate. Residues Asp38 and Glu68 each coordinate Mg(2+). 68-69 (EA) lines the substrate pocket.

Belongs to the YjjX NTPase family. In terms of assembly, homodimer. Mg(2+) serves as cofactor. The cofactor is Mn(2+).

It catalyses the reaction XTP + H2O = XDP + phosphate + H(+). The enzyme catalyses ITP + H2O = IDP + phosphate + H(+). Its function is as follows. Phosphatase that hydrolyzes non-canonical purine nucleotides such as XTP and ITP to their respective diphosphate derivatives. Probably excludes non-canonical purines from DNA/RNA precursor pool, thus preventing their incorporation into DNA/RNA and avoiding chromosomal lesions. The chain is Inosine/xanthosine triphosphatase from Yersinia pseudotuberculosis serotype IB (strain PB1/+).